We begin with the raw amino-acid sequence, 155 residues long: METQRASLSLGRCSLWLLLLGLALPSASAQVLSYREAVLRAVDQLNEQSSEPNIYRLLELDQPPQDDEDPDSPKRVSFRVKETVCPRTTQQPPEQCDFKENGLLKRCEGTVTLDQVRGNFDITCNNHQSIRITKQPWAPPQAARICRIIFLRVCR.

Positions 1 to 29 (METQRASLSLGRCSLWLLLLGLALPSASA) are cleaved as a signal peptide. Gln-30 carries the pyrrolidone carboxylic acid modification. Positions 30 to 143 (QVLSYREAVL…KQPWAPPQAA (114 aa)) are excised as a propeptide. 3 cysteine pairs are disulfide-bonded: Cys-85-Cys-96, Cys-107-Cys-124, and Cys-146-Cys-154.

Belongs to the cathelicidin family.

It is found in the secreted. In terms of biological role, potent microbicidal activity; active against S.aureus and E.coli. This chain is Cathelicidin-1 (CATHL1A), found in Ovis aries (Sheep).